Here is an 841-residue protein sequence, read N- to C-terminus: MDGLCYVIFIIFSLLSCAFSPLSYASPATFSRRHLLQAPVTDPSTFSPPFFPLYSSTSPPPPPSPPQPLPPPAPTFATFPANISALVLPRSPKPQTPSRTLLIPAISAVLAAATLIALAFFFYGRWRGQTSHFKDESKSLASDISQSQQQTLPCPPPRNNNTQNKLSVAPSTSDVLYLGNVVTSSGSGFVKPESPDISPLPPLPARSFLLQHHSEANLDEEEEDDDFYSPLASIAGQESRDRRINPYSNCSCSISSHSDSPAMSPSAAMSPPMNSTAPHWSTNQNTHSPSSPERTVRNNKRYGGQSLRMFSLWNQNLGFPRISSASTSPERGMIRTPDAYARSSMYSSVSTTPDRFFRKVLDSSPPRWNDFSRNVKSLFLSSTSASPARDFCINISESSRSLKSSWEKPELDTTQQRESAAAAVTLPPPQRPPPAMPEPPPLVPPSQSFMVQKSGKKLSFSELPQSCGEGTTDRPKPKLKPLPWDKVRPSSRRTNTWDRLPYNSSNANSKQRSLSCDLPMLNQESKVLDPRKSQNVAVLLTTLKLTTNDVCQALRDGHYDALGVELLESLARVAPSEEEEKKLISYSDDSVIKLAPSERFLKELLNVPFVFKRVDALLSVASFDSKVKHLKRSFSVIQAACEALRNSRMLLRLVGATLEAGMKSGNAHDFKLEALLGLVDIKSSDGRTSILDSVVQKITESEGIKGLQVVRNLSSVLNDAKKSAELDYGVVRMNVSKLYEEVQKISEVLRLCEETGHSEEHQWWKFRESVTRFLETAAEEIKKIEREEGSTLFAVKKITEYFHVDPAKEEAQLLKVFVIVRDFLKILEGVCKKMEVTSSLA.

The N-terminal stretch at 1–25 is a signal peptide; that stretch reads MDGLCYVIFIIFSLLSCAFSPLSYA. The chain crosses the membrane as a helical span at residues 102 to 122; that stretch reads LIPAISAVLAAATLIALAFFF. Disordered regions lie at residues 137–166, 254–297, and 403–512; these read SKSL…QNKL, ISSH…RTVR, and KSSW…SKQR. The segment covering 139–152 has biased composition (polar residues); it reads SLASDISQSQQQTL. The segment covering 254-278 has biased composition (low complexity); sequence ISSHSDSPAMSPSAAMSPPMNSTAP. Residues 279-293 are compositionally biased toward polar residues; sequence HWSTNQNTHSPSSPE. Residues 426–444 are compositionally biased toward pro residues; it reads LPPPQRPPPAMPEPPPLVP. The FH2 domain maps to 469–841; sequence EGTTDRPKPK…KKMEVTSSLA (373 aa). Polar residues predominate over residues 502 to 512; sequence YNSSNANSKQR.

The protein belongs to the formin-like family. Class-I subfamily.

Its subcellular location is the membrane. Functionally, might be involved in the organization and polarity of the actin cytoskeleton. The sequence is that of Formin-like protein 10 (FH10) from Arabidopsis thaliana (Mouse-ear cress).